The chain runs to 229 residues: 2-C-methyl-D-erythritol 4-phosphate cytidylyltransferase (229 aa).

It belongs to the IspD/TarI cytidylyltransferase family. IspD subfamily.

The catalysed reaction is 2-C-methyl-D-erythritol 4-phosphate + CTP + H(+) = 4-CDP-2-C-methyl-D-erythritol + diphosphate. The protein operates within isoprenoid biosynthesis; isopentenyl diphosphate biosynthesis via DXP pathway; isopentenyl diphosphate from 1-deoxy-D-xylulose 5-phosphate: step 2/6. Catalyzes the formation of 4-diphosphocytidyl-2-C-methyl-D-erythritol from CTP and 2-C-methyl-D-erythritol 4-phosphate (MEP). This is 2-C-methyl-D-erythritol 4-phosphate cytidylyltransferase from Clostridium botulinum (strain ATCC 19397 / Type A).